The following is a 416-amino-acid chain: Lysosome-associated membrane glycoprotein 3 (416 aa).

The first 27 residues, 1 to 27, serve as a signal peptide directing secretion; that stretch reads MPRQLSAAAALFASLAVILHDGSQMRA. Residues 28-381 lie on the Lumenal side of the membrane; sequence KAFPETRDYS…NVDECSSDYT (354 aa). N-linked (GlcNAc...) asparagine glycosylation is found at Asn112, Asn158, Asn164, Asn200, Asn232, Asn266, and Asn291. 2 disordered regions span residues 136 to 167 and 179 to 219; these read PTIT…NQTT and STTG…LAPQ. The span at 143-160 shows a compositional bias: low complexity; it reads HTTGTSSSTVSHTTGNTT. Positions 188 to 208 are enriched in low complexity; sequence PTHAPGTTAAAHNTTRTAAPA. Cys237 and Cys274 form a disulfide bridge. The cysteines at positions 339 and 376 are disulfide-linked. Residues 382–402 form a helical membrane-spanning segment; it reads IVLPVIGAIVVGLCLMGMGVY. Residues 403–416 lie on the Cytoplasmic side of the membrane; that stretch reads KIRLRCQSSGYQRI.

It belongs to the LAMP family. As to quaternary structure, monomer. Interacts with FURIN. (Microbial infection) Interacts with mumps virus protein F; this interaction promotes protein F cleavage by FURIN. Detected in tonsil interdigitating dendritic cells, in spleen, lymph node, Peyer's patches in the small instestine, in thymus medulla and in B-cells (at protein level). Expressed in lymphoid organs and dendritic cells. Expressed in lung. Up-regulated in carcinomas of the esophagus, colon, rectum, ureter, stomach, breast, fallopian tube, thyroid and parotid tissues.

Its subcellular location is the cell surface. The protein localises to the lysosome membrane. It is found in the cytoplasmic vesicle membrane. It localises to the early endosome membrane. In terms of biological role, lysosomal membrane glycoprotein which plays a role in the unfolded protein response (UPR) that contributes to protein degradation and cell survival during proteasomal dysfunction. Plays a role in the process of fusion of the lysosome with the autophagosome, thereby modulating the autophagic process. Promotes hepatocellular lipogenesis through activation of the PI3K/Akt pathway. May also play a role in dendritic cell function and in adaptive immunity. Functionally, (Microbial infection) Plays a positive role in post-entry steps of influenza A virus replication, either virus uncoating, cytosolic transport, or nuclear import of viral components, and promotes nuclear accumulation of influenza nucleoprotein/NP at early stages of viral infection. (Microbial infection) Supports the FURIN-mediated cleavage of mumps virus fusion protein F by interacting with both FURIN and the unprocessed form but not the processed form of the viral protein F. Its function is as follows. (Microbial infection) Promotes the intracellular proliferation of Salmonella typhimuium. The protein is Lysosome-associated membrane glycoprotein 3 (LAMP3) of Homo sapiens (Human).